We begin with the raw amino-acid sequence, 578 residues long: Proline--tRNA ligase (578 aa).

It belongs to the class-II aminoacyl-tRNA synthetase family. ProS type 1 subfamily. Homodimer.

The protein localises to the cytoplasm. The catalysed reaction is tRNA(Pro) + L-proline + ATP = L-prolyl-tRNA(Pro) + AMP + diphosphate. Its function is as follows. Catalyzes the attachment of proline to tRNA(Pro) in a two-step reaction: proline is first activated by ATP to form Pro-AMP and then transferred to the acceptor end of tRNA(Pro). As ProRS can inadvertently accommodate and process non-cognate amino acids such as alanine and cysteine, to avoid such errors it has two additional distinct editing activities against alanine. One activity is designated as 'pretransfer' editing and involves the tRNA(Pro)-independent hydrolysis of activated Ala-AMP. The other activity is designated 'posttransfer' editing and involves deacylation of mischarged Ala-tRNA(Pro). The misacylated Cys-tRNA(Pro) is not edited by ProRS. This Burkholderia orbicola (strain AU 1054) protein is Proline--tRNA ligase.